The sequence spans 857 residues: Protein app1 (857 aa).

The ADF-H domain occupies 6–133 (DTSTHGAEIR…NMDDIIRRVA (128 aa)). 3 disordered regions span residues 167–562 (AKVA…VPQR), 585–622 (EVPSVPQPPVAPVVPEAPSVPQPPVAPVAPEVPSVPQR), and 693–723 (QLNEPVVPPLPPHDETQEPQVGGDVKATEHT). Residues 193–204 (KDSKDNSWDDSS) show a composition bias toward basic and acidic residues. Residues 205–217 (KQSNTQTANTTSN) show a composition bias toward low complexity. Over residues 229-240 (AGRKEKSQENKP) the composition is skewed to basic and acidic residues. Composition is skewed to polar residues over residues 276–295 (SISTTTTGSSYRSAESSHAP), 371–385 (PPASTTASKQDSPST), 399–409 (KQVSSNETSAQ), 443–452 (KISSFNSKAG), and 498–511 (SSASQKAAQPSVIT). The span at 522–561 (VVPEAPSVHQPPAAPVAPEVPSAPQRPAAPVVPEAPSVPQ) shows a compositional bias: low complexity. Pro residues-rich tracts occupy residues 587-596 (PSVPQPPVAP) and 602-611 (PSVPQPPVAP). Residues 612–622 (VAPEVPSVPQR) show a composition bias toward low complexity. 2 consecutive SH3 domains span residues 725–785 (PTKT…ITGP) and 800–857 (GPGK…VEEI).

This chain is Protein app1 (app1), found in Schizosaccharomyces pombe (strain 972 / ATCC 24843) (Fission yeast).